A 576-amino-acid polypeptide reads, in one-letter code: Apolipoprotein N-acyltransferase 1 (576 aa).

7 helical membrane-spanning segments follow: residues 15 to 35 (LILCFGIGIGTVFGLSPFSFF), 38 to 58 (GVFASISCIFLFFSLNRTSIW), 60 to 80 (AFLWLLILSQILNFTAFYWIP), 92 to 112 (FVSILFFFLYGLISHLKFFLF), 128 to 148 (YILLIFPAAGTLSDMITFQIF), 168 to 188 (ICGVYGLSFLLLFISSTFLIL), and 204 to 224 (IASLICITFIYGFGLYRIGYI). The CN hydrolase domain maps to 236-538 (LSVLMIQPDT…TGTRAFSIRL (303 aa)). Glu285 (proton acceptor) is an active-site residue. The active site involves Lys355. Cys446 serves as the catalytic Nucleophile. Residues 549–569 (FGNSFLWIFCILILISRLIFV) traverse the membrane as a helical segment.

It belongs to the CN hydrolase family. Apolipoprotein N-acyltransferase subfamily.

The protein localises to the cell inner membrane. It carries out the reaction N-terminal S-1,2-diacyl-sn-glyceryl-L-cysteinyl-[lipoprotein] + a glycerophospholipid = N-acyl-S-1,2-diacyl-sn-glyceryl-L-cysteinyl-[lipoprotein] + a 2-acyl-sn-glycero-3-phospholipid + H(+). Its pathway is protein modification; lipoprotein biosynthesis (N-acyl transfer). In terms of biological role, catalyzes the phospholipid dependent N-acylation of the N-terminal cysteine of apolipoprotein, the last step in lipoprotein maturation. This Leptospira interrogans serogroup Icterohaemorrhagiae serovar Lai (strain 56601) protein is Apolipoprotein N-acyltransferase 1.